A 1349-amino-acid polypeptide reads, in one-letter code: Aldehyde oxidase 2 (1349 aa).

The 2Fe-2S ferredoxin-type domain maps to D8 to V96. The [2Fe-2S] cluster site is built by C47, C52, C55, and C78. Position 117 (Q117) interacts with Mo-molybdopterin. C118, C121, C153, and C155 together coordinate [2Fe-2S] cluster. C155 is a Mo-molybdopterin binding site. Residues F240–K425 form the FAD-binding PCMH-type domain. Residues L268 to L275, A349, S358, H362, D371, and L415 each bind FAD. Mo-molybdopterin-binding positions include G816–F817, A1098–G1101, Q1213, and L1278. Catalysis depends on E1280, which acts as the Proton acceptor; for azaheterocycle hydroxylase activity.

Belongs to the xanthine dehydrogenase family. Homodimer. Requires [2Fe-2S] cluster as cofactor. FAD is required as a cofactor. The cofactor is Mo-molybdopterin. As to expression, only detected at very few levels in nasal mucosa.

It is found in the cytoplasm. The enzyme catalyses an aldehyde + O2 + H2O = a carboxylate + H2O2 + H(+). Oxidase with broad substrate specificity, oxidizing aromatic azaheterocycles, such as phthalazine, as well as aldehydes, such as benzaldehyde and retinal. This is Aldehyde oxidase 2 (AOX2) from Macaca fascicularis (Crab-eating macaque).